Here is an 800-residue protein sequence, read N- to C-terminus: DNA topoisomerase 4 subunit A (800 aa).

Positions 31–495 (LPDVRDGLKP…EIEEIKIDKE (465 aa)) constitute a Topo IIA-type catalytic domain. Y119 acts as the O-(5'-phospho-DNA)-tyrosine intermediate in catalysis.

The protein belongs to the type II topoisomerase GyrA/ParC subunit family. ParC type 2 subfamily. In terms of assembly, heterotetramer composed of ParC and ParE.

The protein localises to the cell membrane. The catalysed reaction is ATP-dependent breakage, passage and rejoining of double-stranded DNA.. Topoisomerase IV is essential for chromosome segregation. It relaxes supercoiled DNA. Performs the decatenation events required during the replication of a circular DNA molecule. The polypeptide is DNA topoisomerase 4 subunit A (Staphylococcus aureus (strain MW2)).